Here is a 282-residue protein sequence, read N- to C-terminus: Phosphatidylserine decarboxylase proenzyme (282 aa).

Active-site charge relay system; for autoendoproteolytic cleavage activity residues include aspartate 88, histidine 144, and serine 247. Serine 247 (schiff-base intermediate with substrate; via pyruvic acid; for decarboxylase activity) is an active-site residue. At serine 247 the chain carries Pyruvic acid (Ser); by autocatalysis.

It belongs to the phosphatidylserine decarboxylase family. PSD-B subfamily. Prokaryotic type I sub-subfamily. In terms of assembly, heterodimer of a large membrane-associated beta subunit and a small pyruvoyl-containing alpha subunit. The cofactor is pyruvate. Is synthesized initially as an inactive proenzyme. Formation of the active enzyme involves a self-maturation process in which the active site pyruvoyl group is generated from an internal serine residue via an autocatalytic post-translational modification. Two non-identical subunits are generated from the proenzyme in this reaction, and the pyruvate is formed at the N-terminus of the alpha chain, which is derived from the carboxyl end of the proenzyme. The autoendoproteolytic cleavage occurs by a canonical serine protease mechanism, in which the side chain hydroxyl group of the serine supplies its oxygen atom to form the C-terminus of the beta chain, while the remainder of the serine residue undergoes an oxidative deamination to produce ammonia and the pyruvoyl prosthetic group on the alpha chain. During this reaction, the Ser that is part of the protease active site of the proenzyme becomes the pyruvoyl prosthetic group, which constitutes an essential element of the active site of the mature decarboxylase.

It is found in the cell membrane. It carries out the reaction a 1,2-diacyl-sn-glycero-3-phospho-L-serine + H(+) = a 1,2-diacyl-sn-glycero-3-phosphoethanolamine + CO2. The protein operates within phospholipid metabolism; phosphatidylethanolamine biosynthesis; phosphatidylethanolamine from CDP-diacylglycerol: step 2/2. Catalyzes the formation of phosphatidylethanolamine (PtdEtn) from phosphatidylserine (PtdSer). In Xanthomonas campestris pv. campestris (strain 8004), this protein is Phosphatidylserine decarboxylase proenzyme.